The primary structure comprises 191 residues: Adenylate kinase (191 aa).

12 to 17 (GSGKTT) is an ATP binding site. Residues 34–63 (STGDLLRAESAKKTERGLLIEKFTSQGELV) are NMP. AMP-binding positions include Thr-35, Arg-40, 61–63 (ELV), 88–91 (GYPR), and Gln-95. Residues 130 to 136 (GRSRGAD) are LID. Arg-131 provides a ligand contact to ATP. 2 residues coordinate AMP: Arg-133 and Arg-145. ATP is bound at residue Arg-173.

This sequence belongs to the adenylate kinase family. As to quaternary structure, monomer.

The protein resides in the cytoplasm. It catalyses the reaction AMP + ATP = 2 ADP. It functions in the pathway purine metabolism; AMP biosynthesis via salvage pathway; AMP from ADP: step 1/1. Its function is as follows. Catalyzes the reversible transfer of the terminal phosphate group between ATP and AMP. Plays an important role in cellular energy homeostasis and in adenine nucleotide metabolism. In Helicobacter pylori (strain HPAG1), this protein is Adenylate kinase.